The sequence spans 230 residues: 7-cyano-7-deazaguanine synthase (230 aa).

ATP is bound at residue 14–24 (LSGGLDSTTTL). C194, C204, C207, and C210 together coordinate Zn(2+).

Belongs to the QueC family. It depends on Zn(2+) as a cofactor.

It catalyses the reaction 7-carboxy-7-deazaguanine + NH4(+) + ATP = 7-cyano-7-deazaguanine + ADP + phosphate + H2O + H(+). Its pathway is purine metabolism; 7-cyano-7-deazaguanine biosynthesis. Functionally, catalyzes the ATP-dependent conversion of 7-carboxy-7-deazaguanine (CDG) to 7-cyano-7-deazaguanine (preQ(0)). This chain is 7-cyano-7-deazaguanine synthase, found in Ruthia magnifica subsp. Calyptogena magnifica.